Consider the following 448-residue polypeptide: MKHRYLPQTEQDQKEMLDVIGVQSIDELFSDIPEKVRFKGAYNIKPAASETELVRELSQLAAKNKDTVSYASFLGAGVYDHYQPVIVDHVISRSEFYTAYTPYQPEISQGELQAIFEFQTMIAELTGMDLANSSMYDGGTALAEAAMLAAGHTKKKKVVVSETVHPEARAVLKTYAKGQHIEVVEVPAKKGQTDLAALEKAVCDETAAVLVQYPNFFGVVEPLKDIEPIAHKGKSLFVVSSNPLALGLLTPPGKLGADIVVGDAQPFGIPAAFGGPHCGYFAVTKKLMRKVPGRLVGQTEDENGVRGFVLTLQAREQHIRRDKATSNICSNQALNALAASVAMTALGKTGIKDIAYQNVQKAHYAKTQAETYGLLADVEGTHFNEFVIKLQEPVQEVNKRLLEKGIIGGYDLGRDYPELQHHMLVAVTELRTKEEIDTFIKELGDRHE.

Belongs to the GcvP family. N-terminal subunit subfamily. The glycine cleavage system is composed of four proteins: P, T, L and H. In this organism, the P 'protein' is a heterodimer of two subunits.

It carries out the reaction N(6)-[(R)-lipoyl]-L-lysyl-[glycine-cleavage complex H protein] + glycine + H(+) = N(6)-[(R)-S(8)-aminomethyldihydrolipoyl]-L-lysyl-[glycine-cleavage complex H protein] + CO2. Its function is as follows. The glycine cleavage system catalyzes the degradation of glycine. The P protein binds the alpha-amino group of glycine through its pyridoxal phosphate cofactor; CO(2) is released and the remaining methylamine moiety is then transferred to the lipoamide cofactor of the H protein. This Bacillus pumilus (strain SAFR-032) protein is Probable glycine dehydrogenase (decarboxylating) subunit 1.